A 588-amino-acid chain; its full sequence is Aspartate--tRNA ligase (588 aa).

L-aspartate is bound at residue Glu-177. Residues 201 to 204 are aspartate; sequence QLFK. Arg-223 serves as a coordination point for L-aspartate. Residues 223–225 and Gln-232 contribute to the ATP site; that span reads RDE. L-aspartate is bound at residue His-451. ATP is bound at residue Glu-485. Arg-492 is a binding site for L-aspartate. An ATP-binding site is contributed by 537–540; that stretch reads GLDR.

Belongs to the class-II aminoacyl-tRNA synthetase family. Type 1 subfamily. Homodimer.

Its subcellular location is the cytoplasm. The catalysed reaction is tRNA(Asp) + L-aspartate + ATP = L-aspartyl-tRNA(Asp) + AMP + diphosphate. Functionally, catalyzes the attachment of L-aspartate to tRNA(Asp) in a two-step reaction: L-aspartate is first activated by ATP to form Asp-AMP and then transferred to the acceptor end of tRNA(Asp). This Staphylococcus aureus (strain Newman) protein is Aspartate--tRNA ligase.